The sequence spans 241 residues: Large ribosomal subunit protein uL3 (241 aa).

Disordered regions lie at residues 139-164 (VSHR…KMPG) and 215-241 (DAPK…QEGA). At Q151 the chain carries N5-methylglutamine.

This sequence belongs to the universal ribosomal protein uL3 family. In terms of assembly, part of the 50S ribosomal subunit. Forms a cluster with proteins L14 and L19. Post-translationally, methylated by PrmB.

In terms of biological role, one of the primary rRNA binding proteins, it binds directly near the 3'-end of the 23S rRNA, where it nucleates assembly of the 50S subunit. In Rhodopseudomonas palustris (strain BisB5), this protein is Large ribosomal subunit protein uL3.